The primary structure comprises 214 residues: Adenylate kinase (214 aa).

10-15 contacts ATP; sequence GAGKGT. The NMP stretch occupies residues 30–59; sequence STGDMLRAAVKAGTELGKQAKEIMDAGKLV. Residues Thr-31, Arg-36, 57–59, 85–88, and Gln-92 each bind AMP; these read KLV and GFPR. Positions 122 to 159 are LID; sequence GRRVHAASGRVYHVKFNPPKVEGKDDVTGEDLTIRKDD. Residues Arg-123 and 132-133 each bind ATP; that span reads VY. Positions 156 and 167 each coordinate AMP. Arg-200 is an ATP binding site.

It belongs to the adenylate kinase family. Monomer.

The protein resides in the cytoplasm. The catalysed reaction is AMP + ATP = 2 ADP. It functions in the pathway purine metabolism; AMP biosynthesis via salvage pathway; AMP from ADP: step 1/1. Catalyzes the reversible transfer of the terminal phosphate group between ATP and AMP. Plays an important role in cellular energy homeostasis and in adenine nucleotide metabolism. In Pectobacterium carotovorum subsp. carotovorum (strain PC1), this protein is Adenylate kinase.